Here is a 620-residue protein sequence, read N- to C-terminus: 1-deoxy-D-xylulose-5-phosphate synthase (620 aa).

Thiamine diphosphate contacts are provided by residues histidine 80 and 121-123; that span reads GHS. Aspartate 152 contacts Mg(2+). Thiamine diphosphate-binding positions include 153 to 154, asparagine 181, tyrosine 288, and glutamate 370; that span reads GA. Asparagine 181 is a binding site for Mg(2+).

Belongs to the transketolase family. DXPS subfamily. Homodimer. Requires Mg(2+) as cofactor. It depends on thiamine diphosphate as a cofactor.

It carries out the reaction D-glyceraldehyde 3-phosphate + pyruvate + H(+) = 1-deoxy-D-xylulose 5-phosphate + CO2. It functions in the pathway metabolic intermediate biosynthesis; 1-deoxy-D-xylulose 5-phosphate biosynthesis; 1-deoxy-D-xylulose 5-phosphate from D-glyceraldehyde 3-phosphate and pyruvate: step 1/1. Its function is as follows. Catalyzes the acyloin condensation reaction between C atoms 2 and 3 of pyruvate and glyceraldehyde 3-phosphate to yield 1-deoxy-D-xylulose-5-phosphate (DXP). The sequence is that of 1-deoxy-D-xylulose-5-phosphate synthase from Escherichia coli O6:K15:H31 (strain 536 / UPEC).